The following is a 460-amino-acid chain: Gastric inhibitory polypeptide receptor (460 aa).

Positions 1–18 (MPLRLLLLLLWLWGLQWA) are cleaved as a signal peptide. The Extracellular segment spans residues 19 to 134 (ETDSEGQTTT…DQTLILERLQ (116 aa)). 3 disulfide bridges follow: cysteine 42-cysteine 66, cysteine 57-cysteine 99, and cysteine 80-cysteine 114. 3 N-linked (GlcNAc...) asparagine glycosylation sites follow: asparagine 58, asparagine 68, and asparagine 73. The helical transmembrane segment at 135–155 (IMYTVGYSLSLTTLLLALLIL) threads the bilayer. Over 156-166 (SLFRRLHCTRN) the chain is Cytoplasmic. The chain crosses the membrane as a helical span at residues 167-185 (YIHMNLFTSFMLRAAAILT). Residues 186–222 (RDQLLPPLGPYTGDQAPTPWNQALAACRTAQIMTQYC) lie on the Extracellular side of the membrane. Residues 223–243 (VGANYTWLLVEGVYLHHLLVI) traverse the membrane as a helical segment. Residues 244 to 255 (VGRSEKGHFRCY) are Cytoplasmic-facing. Residues 256–276 (LLLGWGAPALFVIPWVIVRYL) traverse the membrane as a helical segment. Residues 277–297 (RENTQCWERNEVKAIWWIIRT) lie on the Extracellular side of the membrane. A helical membrane pass occupies residues 298 to 318 (PILITILINFLIFIRILGILV). The Cytoplasmic portion of the chain corresponds to 319–337 (SKLRTRQMRCPDYRLRLAR). The helical transmembrane segment at 338-358 (STLTLVPLLGVHEVVFAPVTE) threads the bilayer. Residues 359-370 (EQVEGSLRFAKL) lie on the Extracellular side of the membrane. Residues 371 to 391 (AFEIFLSSFQGFLVSVLYCFI) traverse the membrane as a helical segment. The Cytoplasmic portion of the chain corresponds to 392–460 (NKEVQSEIRQ…PGDEVLESYC (69 aa)).

It belongs to the G-protein coupled receptor 2 family. May form homodimers and heterodimers with GLP1R. In terms of processing, N-glycosylation is required for cell surface expression and lengthens receptor half-life by preventing degradation in the ER.

Its subcellular location is the cell membrane. In terms of biological role, this is a receptor for GIP. The activity of this receptor is mediated by G proteins which activate adenylyl cyclase. This is Gastric inhibitory polypeptide receptor (Gipr) from Mus musculus (Mouse).